Reading from the N-terminus, the 148-residue chain is UPF0756 membrane protein KPK_3307 (148 aa).

4 helical membrane-spanning segments follow: residues 14 to 34 (ALGF…LIIV), 51 to 71 (LTVG…SGTL), 86 to 106 (LLAI…VSLM), and 121 to 141 (VLGV…AGII).

The protein belongs to the UPF0756 family.

Its subcellular location is the cell membrane. This chain is UPF0756 membrane protein KPK_3307, found in Klebsiella pneumoniae (strain 342).